Here is a 316-residue protein sequence, read N- to C-terminus: Porphobilinogen deaminase (316 aa).

The residue at position 245 (cysteine 245) is an S-(dipyrrolylmethanemethyl)cysteine.

The protein belongs to the HMBS family. In terms of assembly, monomer. Dipyrromethane serves as cofactor.

The enzyme catalyses 4 porphobilinogen + H2O = hydroxymethylbilane + 4 NH4(+). It functions in the pathway porphyrin-containing compound metabolism; protoporphyrin-IX biosynthesis; coproporphyrinogen-III from 5-aminolevulinate: step 2/4. It participates in porphyrin-containing compound metabolism; chlorophyll biosynthesis. Tetrapolymerization of the monopyrrole PBG into the hydroxymethylbilane pre-uroporphyrinogen in several discrete steps. The protein is Porphobilinogen deaminase of Prochlorococcus marinus (strain MIT 9515).